The sequence spans 609 residues: MGESERSEAFNPPREAGMSSGDIAELEQLRREIVVLREQLEHAVGPHGSVRSVRDVHQLEARIDSLTARNSKLMDTLKEARQQLLALREEVDRLGQPPSGYGVLLAAHDDETVDVFTSGRKMRLTCSPNIEVASLRKGQTVRLNEALTVVEAGTFEAVGEVSTLREVLADGHRALVVGHADEERIVCLAEPLVAENLLDGVPGALNDDSRPRKLRPGDSLLVDPKAGYAFERVPKAEVEDLVLEEVPDVSYQDIGGLTRQIEQIRDAVELPFLHKELYREYALRPPKGVLLYGPPGCGKTLIAKAVANSLAKKMAEVRGDDAREAKSYFLNIKGPELLNKFVGETERHIRLIFQRAREKASEGTPVIVFFDEMDSIFRTRGTGVSSDVETTVVPQLLSEIDGVEGLENVIVIGASNREDMIDPAILRPGRLDVKIKIERPDAEAAQDIYSKYLTESLPVHADDLTEFDGDRAACIKAMIEKVVDRMYAEIDDNRFLEVTYANGDKEVMYFKDFNSGAMIQNVVDRAKKNAIKSVLETGQPGLRIQHLLDSIVDEFAENEDLPNTTNPDDWARISGKKGERIVYIRTLVTGKSSSASRAIDTESNLGQYL.

The tract at residues 1–22 (MGESERSEAFNPPREAGMSSGD) is disordered. Residues 20-96 (SGDIAELEQL…LREEVDRLGQ (77 aa)) adopt a coiled-coil conformation. 296–301 (GCGKTL) contacts ATP. The tract at residues 608 to 609 (YL) is docks into pockets in the proteasome alpha-ring.

The protein belongs to the AAA ATPase family. In terms of assembly, homohexamer. Assembles into a hexameric ring structure that caps the 20S proteasome core. Strongly interacts with the prokaryotic ubiquitin-like protein Pup through a hydrophobic interface; the interacting region of ARC lies in its N-terminal coiled-coil domain. There is one Pup binding site per ARC hexamer ring. Upon ATP-binding, the C-terminus of ARC interacts with the alpha-rings of the proteasome core, possibly by binding to the intersubunit pockets.

The protein operates within protein degradation; proteasomal Pup-dependent pathway. Functionally, ATPase which is responsible for recognizing, binding, unfolding and translocation of pupylated proteins into the bacterial 20S proteasome core particle. May be essential for opening the gate of the 20S proteasome via an interaction with its C-terminus, thereby allowing substrate entry and access to the site of proteolysis. Thus, the C-termini of the proteasomal ATPase may function like a 'key in a lock' to induce gate opening and therefore regulate proteolysis. In Mycobacterium leprae (strain Br4923), this protein is Proteasome-associated ATPase.